The sequence spans 368 residues: S-adenosylmethionine decarboxylase proenzyme (368 aa).

Catalysis depends on residues E26 and E29. S83 functions as the Schiff-base intermediate with substrate; via pyruvic acid in the catalytic mechanism. The residue at position 83 (S83) is a Pyruvic acid (Ser); by autocatalysis. Catalysis depends on C97, which acts as the Proton donor; for catalytic activity. Catalysis depends on proton acceptor; for processing activity residues S246 and H261.

The protein belongs to the eukaryotic AdoMetDC family. In terms of assembly, heterotetramer of two alpha and two beta chains. Pyruvate serves as cofactor. Post-translationally, is synthesized initially as an inactive proenzyme. Formation of the active enzyme involves a self-maturation process in which the active site pyruvoyl group is generated from an internal serine residue via an autocatalytic post-translational modification. Two non-identical subunits are generated from the proenzyme in this reaction, and the pyruvate is formed at the N-terminus of the alpha chain, which is derived from the carboxyl end of the proenzyme. The post-translation cleavage follows an unusual pathway, termed non-hydrolytic serinolysis, in which the side chain hydroxyl group of the serine supplies its oxygen atom to form the C-terminus of the beta chain, while the remainder of the serine residue undergoes an oxidative deamination to produce ammonia and the pyruvoyl group blocking the N-terminus of the alpha chain.

It catalyses the reaction S-adenosyl-L-methionine + H(+) = S-adenosyl 3-(methylsulfanyl)propylamine + CO2. Its pathway is amine and polyamine biosynthesis; S-adenosylmethioninamine biosynthesis; S-adenosylmethioninamine from S-adenosyl-L-methionine: step 1/1. In terms of biological role, essential for biosynthesis of the polyamines spermidine and spermine. Polyamines are essential for cell proliferation and are implicated in cellular processes, ranging from DNA replication to apoptosis. The protein is S-adenosylmethionine decarboxylase proenzyme of Caenorhabditis elegans.